A 303-amino-acid polypeptide reads, in one-letter code: UDP-3-O-acyl-N-acetylglucosamine deacetylase (303 aa).

Positions 78, 237, and 241 each coordinate Zn(2+). The Proton donor role is filled by His-264.

It belongs to the LpxC family. It depends on Zn(2+) as a cofactor.

The catalysed reaction is a UDP-3-O-[(3R)-3-hydroxyacyl]-N-acetyl-alpha-D-glucosamine + H2O = a UDP-3-O-[(3R)-3-hydroxyacyl]-alpha-D-glucosamine + acetate. It functions in the pathway glycolipid biosynthesis; lipid IV(A) biosynthesis; lipid IV(A) from (3R)-3-hydroxytetradecanoyl-[acyl-carrier-protein] and UDP-N-acetyl-alpha-D-glucosamine: step 2/6. Catalyzes the hydrolysis of UDP-3-O-myristoyl-N-acetylglucosamine to form UDP-3-O-myristoylglucosamine and acetate, the committed step in lipid A biosynthesis. The polypeptide is UDP-3-O-acyl-N-acetylglucosamine deacetylase (Xanthomonas oryzae pv. oryzae (strain MAFF 311018)).